The following is a 294-amino-acid chain: 4-hydroxy-tetrahydrodipicolinate synthase (294 aa).

Threonine 47 contributes to the pyruvate binding site. Tyrosine 135 (proton donor/acceptor) is an active-site residue. The Schiff-base intermediate with substrate role is filled by lysine 163. Residue threonine 205 coordinates pyruvate.

The protein belongs to the DapA family. As to quaternary structure, homotetramer; dimer of dimers.

It localises to the cytoplasm. The catalysed reaction is L-aspartate 4-semialdehyde + pyruvate = (2S,4S)-4-hydroxy-2,3,4,5-tetrahydrodipicolinate + H2O + H(+). Its pathway is amino-acid biosynthesis; L-lysine biosynthesis via DAP pathway; (S)-tetrahydrodipicolinate from L-aspartate: step 3/4. In terms of biological role, catalyzes the condensation of (S)-aspartate-beta-semialdehyde [(S)-ASA] and pyruvate to 4-hydroxy-tetrahydrodipicolinate (HTPA). The sequence is that of 4-hydroxy-tetrahydrodipicolinate synthase from Rickettsia peacockii (strain Rustic).